The following is a 445-amino-acid chain: Phosphoglucosamine mutase (445 aa).

Residue serine 99 is the Phosphoserine intermediate of the active site. Residues serine 99, aspartate 242, aspartate 244, and aspartate 246 each coordinate Mg(2+). Serine 99 is subject to Phosphoserine.

Belongs to the phosphohexose mutase family. Mg(2+) serves as cofactor. Activated by phosphorylation.

The enzyme catalyses alpha-D-glucosamine 1-phosphate = D-glucosamine 6-phosphate. In terms of biological role, catalyzes the conversion of glucosamine-6-phosphate to glucosamine-1-phosphate. The polypeptide is Phosphoglucosamine mutase (Nitratiruptor sp. (strain SB155-2)).